Reading from the N-terminus, the 219-residue chain is Protein DMP5 (219 aa).

A disordered region spans residues 1–24; sequence MSALRLRNANTPAPELDELSDQTP. Transmembrane regions (helical) follow at residues 51–71, 82–102, 142–162, and 182–202; these read LSNL…PVFT, FLTA…SFTD, MRFV…AVAL, and VLDI…MVFP.

The protein belongs to the plant DMP1 protein family.

It localises to the endoplasmic reticulum membrane. In terms of biological role, involved in membrane remodeling. This chain is Protein DMP5, found in Arabidopsis thaliana (Mouse-ear cress).